Reading from the N-terminus, the 262-residue chain is MLDPIAIQLGPLAIRWYALCIVTGLILAVYLTMKEAPRKKIIPDDILDFILVAFPLAILGARLYYVIFRFDYYSQNLGEIFAIWNGGLAIYGGLITGALVLYIFADRKLINTWDFLDIAAPSVMIAQSLGRWGNFFNQEAYGATVDNLDYLPGFIRDQMYIEGSYRQPTFLYESLWNLLGFALILIFRRKWKSLRRGHITAFYLIWYGFGRMVIEGMRTDSLMFFGFRVSQWLSVVLIGLGIMIVIYQNRKKAPYYITEEEN.

Helical transmembrane passes span 9-29 (LGPLAIRWYALCIVTGLILAV), 41-61 (IIPDDILDFILVAFPLAILGA), 80-100 (IFAIWNGGLAIYGGLITGALV), and 109-129 (LINTWDFLDIAAPSVMIAQSL). R131 contacts a 1,2-diacyl-sn-glycero-3-phospho-(1'-sn-glycerol). 3 consecutive transmembrane segments (helical) span residues 167–187 (QPTFLYESLWNLLGFALILIF), 197–217 (GHITAFYLIWYGFGRMVIEGM), and 226–246 (GFRVSQWLSVVLIGLGIMIVI).

The protein belongs to the Lgt family.

The protein localises to the cell membrane. It catalyses the reaction L-cysteinyl-[prolipoprotein] + a 1,2-diacyl-sn-glycero-3-phospho-(1'-sn-glycerol) = an S-1,2-diacyl-sn-glyceryl-L-cysteinyl-[prolipoprotein] + sn-glycerol 1-phosphate + H(+). Its pathway is protein modification; lipoprotein biosynthesis (diacylglyceryl transfer). Catalyzes the transfer of the diacylglyceryl group from phosphatidylglycerol to the sulfhydryl group of the N-terminal cysteine of a prolipoprotein, the first step in the formation of mature lipoproteins. This is Phosphatidylglycerol--prolipoprotein diacylglyceryl transferase from Streptococcus pneumoniae serotype 4 (strain ATCC BAA-334 / TIGR4).